Reading from the N-terminus, the 422-residue chain is Serine hydroxymethyltransferase 2 (422 aa).

(6S)-5,6,7,8-tetrahydrofolate-binding positions include leucine 121 and 125-127 (GHL). Lysine 230 is subject to N6-(pyridoxal phosphate)lysine.

It belongs to the SHMT family. Homodimer. It depends on pyridoxal 5'-phosphate as a cofactor.

It is found in the cytoplasm. It catalyses the reaction (6R)-5,10-methylene-5,6,7,8-tetrahydrofolate + glycine + H2O = (6S)-5,6,7,8-tetrahydrofolate + L-serine. Its pathway is one-carbon metabolism; tetrahydrofolate interconversion. It participates in amino-acid biosynthesis; glycine biosynthesis; glycine from L-serine: step 1/1. Catalyzes the reversible interconversion of serine and glycine with tetrahydrofolate (THF) serving as the one-carbon carrier. This reaction serves as the major source of one-carbon groups required for the biosynthesis of purines, thymidylate, methionine, and other important biomolecules. Also exhibits THF-independent aldolase activity toward beta-hydroxyamino acids, producing glycine and aldehydes, via a retro-aldol mechanism. The chain is Serine hydroxymethyltransferase 2 from Agrobacterium fabrum (strain C58 / ATCC 33970) (Agrobacterium tumefaciens (strain C58)).